We begin with the raw amino-acid sequence, 1155 residues long: DNA-directed RNA polymerase subunit beta (1155 aa).

Belongs to the RNA polymerase beta chain family. In terms of assembly, the RNAP catalytic core consists of 2 alpha, 1 beta, 1 beta' and 1 omega subunit. When a sigma factor is associated with the core the holoenzyme is formed, which can initiate transcription.

It catalyses the reaction RNA(n) + a ribonucleoside 5'-triphosphate = RNA(n+1) + diphosphate. Functionally, DNA-dependent RNA polymerase catalyzes the transcription of DNA into RNA using the four ribonucleoside triphosphates as substrates. The polypeptide is DNA-directed RNA polymerase subunit beta (Borrelia hermsii (strain HS1 / DAH)).